The following is a 158-amino-acid chain: Probable transcription regulator ArfM (158 aa).

Its function is as follows. Activates, in anaerobic conditions, the transcription of the fermentative operons lctEP and alsDS, of the hmp gene encoding a flavohemoglobin-like protein, the nitrite reductase operon nasDE and the heme biosynthesis genes hemN and hemZ. This is Probable transcription regulator ArfM (arfM) from Bacillus subtilis (strain 168).